The primary structure comprises 549 residues: MFS-type transporter TwmF (549 aa).

Helical transmembrane passes span 29–49 (IVIGLGITNLLAALENTVLTI), 63–83 (NFIWVTNAFFLSSTAILPLFG), 99–119 (VAIFVLGSGLCGGASTGAMLI), and 126–146 (GVGSGGIIMLSSIIISDLVPL). An N-linked (GlcNAc...) asparagine glycan is attached at N151. The next 10 helical transmembrane spans lie at 155–175 (ILMSILGIGSALGPLIGGAIV), 182–202 (WVFYLNLPIGGVSFVFLFIFL), 221–241 (LVGNAIVIASTVAILYALSYA), 249–269 (SWHTLVPLLVGFLGLFIFAGL), 291–311 (IILAINTFVSAALLYWCLFFL), 328–348 (VALLPISLLGIPGSMVGAIAL), 355–375 (KPVHIFAFALQTLGLGLFTLF), 390–410 (IVAFGGGMIFTTMLPAFQAFI), 421–441 (AWYFIRLFGHIWGVAIPAAIF), and 502–522 (VSIAFAGVAFLLTLLEKDVGL).

The protein belongs to the major facilitator superfamily.

Its subcellular location is the membrane. In terms of biological role, MFS efflux transporter; part of the gene cluster that mediates the biosynthesis of wortmanamides A and B, reduced long-chain polyketides amidated with a specific omega-amino acid, 5-aminopentanoic acid (5PA). The polypeptide is MFS-type transporter TwmF (Talaromyces wortmannii (Penicillium wortmannii)).